The chain runs to 484 residues: Regulator of G-protein signaling 9 (484 aa).

The DEP domain maps to 30–105 (PDTGVKTQSQ…PDSSLYRFQT (76 aa)). Residues 219-280 (ITAVKKEIMY…ITDDTQFWDL (62 aa)) form the G protein gamma domain. Residues 299–414 (NFSELIRDPK…LKSPIYKEML (116 aa)) enclose the RGS domain.

As to quaternary structure, heterodimer with Gbeta5. Interacts with RGS7BP, leading to regulate the subcellular location of the heterodimer formed with Gbeta5. Component of the RGS9-1-Gbeta5 complex composed of RGS9 (RGS9-1), Gbeta5 (GNB5) and RGS9BP. Phosphorylation is decreased by light exposition.

The protein localises to the membrane. Its function is as follows. Inhibits signal transduction by increasing the GTPase activity of G protein alpha subunits thereby driving them into their inactive GDP-bound form. Binds to G(t)-alpha. Involved in phototransduction; key element in the recovery phase of visual transduction. The polypeptide is Regulator of G-protein signaling 9 (Tamias striatus (Eastern chipmunk)).